The following is a 399-amino-acid chain: Lipoyl synthase, mitochondrial (399 aa).

The transit peptide at 1–14 (MALISRSCGAASRY) directs the protein to the mitochondrion. A compositionally biased stretch (low complexity) spans 39-52 (AASTSSSSSPSPST). The disordered stretch occupies residues 39–60 (AASTSSSSSPSPSTHNDRKKDL). [4Fe-4S] cluster contacts are provided by C128, C133, C139, C159, C163, C166, and S374. Residues 144-363 (EYATATATIM…EKVGQEMGFI (220 aa)) enclose the Radical SAM core domain.

The protein belongs to the radical SAM superfamily. Lipoyl synthase family. [4Fe-4S] cluster serves as cofactor.

It localises to the mitochondrion. The catalysed reaction is [[Fe-S] cluster scaffold protein carrying a second [4Fe-4S](2+) cluster] + N(6)-octanoyl-L-lysyl-[protein] + 2 oxidized [2Fe-2S]-[ferredoxin] + 2 S-adenosyl-L-methionine + 4 H(+) = [[Fe-S] cluster scaffold protein] + N(6)-[(R)-dihydrolipoyl]-L-lysyl-[protein] + 4 Fe(3+) + 2 hydrogen sulfide + 2 5'-deoxyadenosine + 2 L-methionine + 2 reduced [2Fe-2S]-[ferredoxin]. Its pathway is protein modification; protein lipoylation via endogenous pathway; protein N(6)-(lipoyl)lysine from octanoyl-[acyl-carrier-protein]: step 2/2. Functionally, catalyzes the radical-mediated insertion of two sulfur atoms into the C-6 and C-8 positions of the octanoyl moiety bound to the lipoyl domains of lipoate-dependent enzymes, thereby converting the octanoylated domains into lipoylated derivatives. This is Lipoyl synthase, mitochondrial (lias) from Danio rerio (Zebrafish).